A 149-amino-acid polypeptide reads, in one-letter code: Cytochrome c-type biogenesis protein CcmE (149 aa).

The Cytoplasmic segment spans residues 1–7; sequence MTRKQKR. The chain crosses the membrane as a helical; Signal-anchor for type II membrane protein span at residues 8–28; the sequence is LAVIAGGVGFIMVAVLLVLFA. Residues 29–149 lie on the Periplasmic side of the membrane; sequence FGQSIAYFYM…GVWKGEGEAK (121 aa). Heme-binding residues include His-123 and Tyr-127.

The protein belongs to the CcmE/CycJ family.

The protein resides in the cell inner membrane. Heme chaperone required for the biogenesis of c-type cytochromes. Transiently binds heme delivered by CcmC and transfers the heme to apo-cytochromes in a process facilitated by CcmF and CcmH. This is Cytochrome c-type biogenesis protein CcmE from Allorhizobium ampelinum (strain ATCC BAA-846 / DSM 112012 / S4) (Agrobacterium vitis (strain S4)).